The chain runs to 399 residues: Calsequestrin-2 (399 aa).

The signal sequence occupies residues 1–19 (MKRTHLFIVGIYFLSSCRA). Residue Tyr282 is modified to Phosphotyrosine. Asn335 is a glycosylation site (N-linked (GlcNAc...) asparagine). Residues 365 to 399 (VLSGKINTEDDDEDDDDDDNSDEEDNDDSDDDDDE) form a disordered region. A compositionally biased stretch (acidic residues) spans 373 to 399 (EDDDEDDDDDDNSDEEDNDDSDDDDDE). 2 positions are modified to phosphoserine: Ser385 and Ser393.

The protein belongs to the calsequestrin family. Monomer, homodimer and homooligomer. Mostly monomeric in the absence of calcium. Forms higher oligomers in a calcium-dependent manner. Dimers associate to form tetramers, that then form linear homomer chains. Interacts with ASPH and TRDN. In terms of processing, phosphorylation in the C-terminus, probably by CK2, moderately increases calcium buffering capacity. N-glycosylated.

The protein resides in the sarcoplasmic reticulum lumen. In terms of biological role, calsequestrin is a high-capacity, moderate affinity, calcium-binding protein and thus acts as an internal calcium store in muscle. Calcium ions are bound by clusters of acidic residues at the protein surface, especially at the interface between subunits. Can bind around 60 Ca(2+) ions. Regulates the release of lumenal Ca(2+) via the calcium release channel RYR2; this plays an important role in triggering muscle contraction. Plays a role in excitation-contraction coupling in the heart and in regulating the rate of heart beats. The protein is Calsequestrin-2 (CASQ2) of Homo sapiens (Human).